The chain runs to 158 residues: Transcription elongation factor GreA (158 aa).

Positions 48 to 74 (EYDAAKNRQGFIEGRIKELNDKIARAE) form a coiled coil.

Belongs to the GreA/GreB family.

In terms of biological role, necessary for efficient RNA polymerase transcription elongation past template-encoded arresting sites. The arresting sites in DNA have the property of trapping a certain fraction of elongating RNA polymerases that pass through, resulting in locked ternary complexes. Cleavage of the nascent transcript by cleavage factors such as GreA or GreB allows the resumption of elongation from the new 3'terminus. GreA releases sequences of 2 to 3 nucleotides. The polypeptide is Transcription elongation factor GreA (Syntrophotalea carbinolica (strain DSM 2380 / NBRC 103641 / GraBd1) (Pelobacter carbinolicus)).